Reading from the N-terminus, the 102-residue chain is Large ribosomal subunit protein uL24 (102 aa).

Belongs to the universal ribosomal protein uL24 family. In terms of assembly, part of the 50S ribosomal subunit.

One of two assembly initiator proteins, it binds directly to the 5'-end of the 23S rRNA, where it nucleates assembly of the 50S subunit. Functionally, one of the proteins that surrounds the polypeptide exit tunnel on the outside of the subunit. The polypeptide is Large ribosomal subunit protein uL24 (Limosilactobacillus fermentum (strain NBRC 3956 / LMG 18251) (Lactobacillus fermentum)).